Consider the following 137-residue polypeptide: Small ribosomal subunit protein uS11 (137 aa).

Disordered stretches follow at residues 1–32 (MPPK…AHIK) and 118–137 (ISDV…RRRV). Over residues 12–21 (KTQKSRRRDK) the composition is skewed to basic residues.

Belongs to the universal ribosomal protein uS11 family. As to quaternary structure, part of the 30S ribosomal subunit. Interacts with proteins S7 and S18. Binds to IF-3.

In terms of biological role, located on the platform of the 30S subunit, it bridges several disparate RNA helices of the 16S rRNA. Forms part of the Shine-Dalgarno cleft in the 70S ribosome. This Nocardia farcinica (strain IFM 10152) protein is Small ribosomal subunit protein uS11.